Reading from the N-terminus, the 304-residue chain is Protoheme IX farnesyltransferase 1 (304 aa).

8 helical membrane-spanning segments follow: residues 24-44 (VVVL…KAPL), 47-67 (FVPW…AGAA), 99-119 (MALG…LAFT), 122-142 (LTAW…TGFL), 150-170 (IVIG…AITG), 176-196 (PLLL…ALCI), 228-248 (LVLF…LVYL), and 280-300 (YSIV…YLPL).

Belongs to the UbiA prenyltransferase family. Protoheme IX farnesyltransferase subfamily.

Its subcellular location is the cell inner membrane. The catalysed reaction is heme b + (2E,6E)-farnesyl diphosphate + H2O = Fe(II)-heme o + diphosphate. It functions in the pathway porphyrin-containing compound metabolism; heme O biosynthesis; heme O from protoheme: step 1/1. In terms of biological role, converts heme B (protoheme IX) to heme O by substitution of the vinyl group on carbon 2 of heme B porphyrin ring with a hydroxyethyl farnesyl side group. In Pseudomonas paraeruginosa (strain DSM 24068 / PA7) (Pseudomonas aeruginosa (strain PA7)), this protein is Protoheme IX farnesyltransferase 1.